The chain runs to 154 residues: Small ribosomal subunit protein bS16 (154 aa).

Positions alanine 111 to lysine 121 are enriched in low complexity. Residues alanine 111–glycine 154 are disordered. A compositionally biased stretch (basic and acidic residues) spans alanine 127–glutamate 144.

It belongs to the bacterial ribosomal protein bS16 family.

This Salinispora tropica (strain ATCC BAA-916 / DSM 44818 / JCM 13857 / NBRC 105044 / CNB-440) protein is Small ribosomal subunit protein bS16.